The sequence spans 477 residues: Mitochondrial adenyl nucleotide antiporter SLC25A24 (477 aa).

The tract at residues 1–173 (MLRWLRDFVL…RFWKHSTGID (173 aa)) is regulatory N-terminal domain. Over 1–197 (MLRWLRDFVL…EKKSGQWWRQ (197 aa)) the chain is Mitochondrial intermembrane. 4 consecutive EF-hand domains span residues 19 to 54 (EQPT…LGIP), 55 to 88 (LGQD…KDHE), 86 to 121 (DHEK…LGLT), and 122 to 157 (ISEQ…NPVT). 20 residues coordinate Ca(2+): Asp32, Asn34, Asp36, Val38, Glu43, Asp68, Asn70, Asp72, Lys74, Glu79, Asp99, Asn101, Asp103, Lys105, Glu110, Asp135, Asp137, Thr139, Thr141, and Glu146. Residues 159 to 168 (IEEIIRFWKH) form a linker region region. Residues 174–477 (IGDSLTIPDE…MKQTLGVTQK (304 aa)) form a C-terminal transmembrane transporter domain region. Solcar repeat units follow at residues 192–278 (GQWW…YKKL), 286–371 (IGTF…LKSY), and 383–471 (PGVM…MKQT). The chain crosses the membrane as a helical span at residues 198 to 215 (LLAGGIAGAVSRTSTAPL). The Mitochondrial matrix portion of the chain corresponds to 216 to 252 (DRLKIMMQVHGSKSDKMNIFGGFRQMVKEGGIRSLWR). The chain crosses the membrane as a helical span at residues 253–272 (GNGTNVIKIAPETAVKFWAY). The Mitochondrial intermembrane segment spans residues 273 to 295 (EQYKKLLTEEGQKIGTFERFISG). The helical transmembrane segment at 296 to 309 (SMAGATAQTFIYPM) threads the bilayer. Topologically, residues 310-345 (EVMKTRLAVGKTGQYSGIYDCAKKILKHEGLGAFYK) are mitochondrial matrix. At Lys320 the chain carries N6-acetyllysine; alternate. At Lys320 the chain carries N6-succinyllysine; alternate. At Lys336 the chain carries N6-acetyllysine. A helical membrane pass occupies residues 346–365 (GYVPNLLGIIPYAGIDLAVY). Topologically, residues 366 to 388 (ELLKSYWLDNFAKDSVNPGVMVL) are mitochondrial intermembrane. A helical transmembrane segment spans residues 389–406 (LGCGALSSTCGQLASYPL). The Mitochondrial matrix portion of the chain corresponds to 407–445 (ALVRTRMQAQAMLEGSPQLNMVGLFRRIISKEGIPGLYR). An N6-acetyllysine; alternate modification is found at Lys437. Residue Lys437 is modified to N6-succinyllysine; alternate. The chain crosses the membrane as a helical span at residues 446-465 (GITPNFMKVLPAVGISYVVY). The Mitochondrial intermembrane portion of the chain corresponds to 466–477 (ENMKQTLGVTQK).

The protein belongs to the mitochondrial carrier (TC 2.A.29) family. In terms of assembly, monomer. In terms of tissue distribution, expressed in all tissues tested. Highly expressed in testis, expressed at intermediate level in small intestine and pancreas, and weakly expressed in kidney, spleen, liver, skeletal muscle and heart.

Its subcellular location is the mitochondrion inner membrane. The catalysed reaction is Mg(2+)(out) + phosphate(in) + ATP(out) = Mg(2+)(in) + phosphate(out) + ATP(in). It catalyses the reaction ADP(out) + phosphate(in) + H(+)(out) = ADP(in) + phosphate(out) + H(+)(in). The enzyme catalyses AMP(out) + phosphate(in) = AMP(in) + phosphate(out). It carries out the reaction phosphate(in) + ATP(out) + 2 H(+)(out) = phosphate(out) + ATP(in) + 2 H(+)(in). The catalysed reaction is dADP(in) + ADP(out) = dADP(out) + ADP(in). It catalyses the reaction Mg(2+)(in) + ADP(out) + ATP(in) + H(+)(out) = Mg(2+)(out) + ADP(in) + ATP(out) + H(+)(in). The enzyme catalyses ADP(out) + diphosphate(in) = ADP(in) + diphosphate(out). It carries out the reaction dAMP(in) + ADP(out) + H(+)(out) = dAMP(out) + ADP(in) + H(+)(in). The catalysed reaction is 3'-AMP(in) + ADP(out) + H(+)(out) = 3'-AMP(out) + ADP(in) + H(+)(in). It catalyses the reaction dAMP(out) + phosphate(in) = dAMP(in) + phosphate(out). The enzyme catalyses 3'-AMP(out) + phosphate(in) = 3'-AMP(in) + phosphate(out). It carries out the reaction dADP(out) + phosphate(in) + H(+)(out) = dADP(in) + phosphate(out) + H(+)(in). Activated by an increase in cytosolic calcium levels that induce a conformational change of the N-terminal regulatory domain, uncapping the channel and allowing transport. Inhibited by bathophenanthroline, mersalyl, p-hydroxymercuribenzoate, bromcresol purple and tannic acid. Electroneutral antiporter that mediates the transport of adenyl nucleotides through the inner mitochondrial membrane. Originally identified as an ATP-magnesium/inorganic phosphate antiporter, it also acts as a broad specificity adenyl nucleotide antiporter. By regulating the mitochondrial matrix adenyl nucleotide pool could adapt to changing cellular energetic demands and indirectly regulate adenyl nucleotide-dependent metabolic pathways. In vitro, a low activity is also observed with guanyl and pyrimidine nucleotides. May play a role in protecting cells against oxidative stress-induced cell death, by buffering calcium levels in the mitochondrial matrix through the formation of calcium-phosphate precipitates. This is Mitochondrial adenyl nucleotide antiporter SLC25A24 from Homo sapiens (Human).